Here is a 306-residue protein sequence, read N- to C-terminus: UDP-N-acetylenolpyruvoylglucosamine reductase (306 aa).

The region spanning 34 to 199 (RVGGPAQLLF…TSVRLRGAIA (166 aa)) is the FAD-binding PCMH-type domain. The active site involves Arg179. Residue Ser228 is the Proton donor of the active site. The active site involves Glu298.

This sequence belongs to the MurB family. FAD is required as a cofactor.

Its subcellular location is the cytoplasm. It carries out the reaction UDP-N-acetyl-alpha-D-muramate + NADP(+) = UDP-N-acetyl-3-O-(1-carboxyvinyl)-alpha-D-glucosamine + NADPH + H(+). It participates in cell wall biogenesis; peptidoglycan biosynthesis. Its function is as follows. Cell wall formation. This chain is UDP-N-acetylenolpyruvoylglucosamine reductase, found in Rhodopseudomonas palustris (strain BisA53).